The following is a 306-amino-acid chain: N-acetylmuramic acid 6-phosphate etherase (306 aa).

One can recognise an SIS domain in the interval 60 to 223 (TAAALRGGGR…STGAMVRLGK (164 aa)). Residue E88 is the Proton donor of the active site. The active site involves E119.

The protein belongs to the GCKR-like family. MurNAc-6-P etherase subfamily. Homodimer.

The enzyme catalyses N-acetyl-D-muramate 6-phosphate + H2O = N-acetyl-D-glucosamine 6-phosphate + (R)-lactate. It functions in the pathway amino-sugar metabolism; N-acetylmuramate degradation. In terms of biological role, specifically catalyzes the cleavage of the D-lactyl ether substituent of MurNAc 6-phosphate, producing GlcNAc 6-phosphate and D-lactate. This chain is N-acetylmuramic acid 6-phosphate etherase, found in Gloeobacter violaceus (strain ATCC 29082 / PCC 7421).